Reading from the N-terminus, the 418-residue chain is MFSPKIIILSTGSELTSGRSQDTNSSWIANELFGIGFTVSKLVVLPDDPEAILEELRTLVSLATKKNPVLLIMTGGLGPTEDDYTLEVVCKLKGVSSVESVVARQRIEAFYKLRGKNFQESLQTAIRQISVPKDSTILNNEVGIAPGFIVSLGENVHLGCMPGVPGEMTEMFREEFSTWILKKYSTRELHSGFRFIWWMSESQFQKEFISKEESVTSGKVIWGVAAKRGYIRVSFQSNERALVDFLLKKLDEIYGPKSTLDVFEELPKLLIEKKITVGTAESCTGGLISKIFTDKPGSSTYFYGGVISYDNGVKEGILGVKKNTLKEFGAVSMETAKEMAEGALVALGVDYSISVTGIAGPGGGTPQKKVGLVYFGIGQKNEKTETHEHYFPFPRSSFREFAAHTGIYLLYNRLKRLA.

It belongs to the CinA family.

The chain is CinA-like protein from Leptospira interrogans serogroup Icterohaemorrhagiae serovar copenhageni (strain Fiocruz L1-130).